Reading from the N-terminus, the 860-residue chain is DNA mismatch repair protein MutS (860 aa).

608–615 (GPNMAGKS) lines the ATP pocket.

This sequence belongs to the DNA mismatch repair MutS family.

Functionally, this protein is involved in the repair of mismatches in DNA. It is possible that it carries out the mismatch recognition step. This protein has a weak ATPase activity. This chain is DNA mismatch repair protein MutS, found in Borrelia turicatae (strain 91E135).